An 820-amino-acid polypeptide reads, in one-letter code: Nuclear pore complex protein Nup93 (820 aa).

This sequence belongs to the nucleoporin interacting component (NIC) family.

The protein localises to the nucleus membrane. It localises to the nucleus. Its subcellular location is the nuclear pore complex. In terms of biological role, plays a role in the nuclear pore complex (NPC) assembly and/or maintenance. The protein is Nuclear pore complex protein Nup93 (dye) of Danio rerio (Zebrafish).